Consider the following 248-residue polypeptide: Gamma-glutamyl peptidase 2 (248 aa).

The 196-residue stretch at 17 to 212 (SEFVKEMYGG…IDRVHKIKFV (196 aa)) folds into the Glutamine amidotransferase type-1 domain. Cysteine 101 serves as the catalytic Nucleophile. Residues histidine 191 and glutamate 193 contribute to the active site.

This sequence belongs to the peptidase C26 family.

Its subcellular location is the cytoplasm. The protein localises to the cytosol. The catalysed reaction is an S-[(1E)-1-(hydroxyimino)-omega-(methylsulfanyl)alkyl]-L-glutathione + H2O = an S-[(1E)-1-(hydroxyimino)-omega-(methylsulfanyl)alkyl]-L-cysteinylglycine + L-glutamate. The enzyme catalyses (E)-1-(glutathione-S-yl)-2-(1H-indol-3-yl)acetohydroximate + H2O = (E)-1-(glycyl-L-cystein-S-yl)-2-(1H-indol-3-yl)acetohydroximate + L-glutamate. It catalyses the reaction 2-(glutathion-S-yl)-2-(1H-indol-3-yl)acetonitrile + H2O = 2-(glycyl-L-cystein-S-yl)-2-(1H-indol-3-yl)acetonitrile + L-glutamate. It carries out the reaction (Z)-1-(glutathione-S-yl)-2-phenylacetohydroximate + H2O = (Z)-1-(glycyl-L-cystein-S-yl)-2-phenylacetohydroximate + L-glutamate. Its pathway is secondary metabolite biosynthesis. Functionally, involved in glucosinolate biosynthesis. Hydrolyzes the gamma-glutamyl peptide bond of several glutathione (GSH) conjugates to produce Cys-Gly conjugates related to glucosinolates. The gamma-Glu-Cys-Gly-GSH conjugates are the sulfur-donating molecule in glucosinolate biosynthesis. In Arabidopsis thaliana (Mouse-ear cress), this protein is Gamma-glutamyl peptidase 2.